We begin with the raw amino-acid sequence, 120 residues long: Large ribosomal subunit protein uL18 (120 aa).

This sequence belongs to the universal ribosomal protein uL18 family. Part of the 50S ribosomal subunit; part of the 5S rRNA/L5/L18/L25 subcomplex. Contacts the 5S and 23S rRNAs.

In terms of biological role, this is one of the proteins that bind and probably mediate the attachment of the 5S RNA into the large ribosomal subunit, where it forms part of the central protuberance. This chain is Large ribosomal subunit protein uL18, found in Methylorubrum extorquens (strain CM4 / NCIMB 13688) (Methylobacterium extorquens).